Reading from the N-terminus, the 181-residue chain is 30 kDa heat shock protein (181 aa).

Positions 33-181 (ASVQSFAPRF…PPTAKKITIQ (149 aa)) constitute a sHSP domain. Residues 79–115 (GRSEREYHSSSDDNKNDQADTENQARGESSEVAKTGE) show a composition bias toward basic and acidic residues. The disordered stretch occupies residues 79–127 (GRSEREYHSSSDDNKNDQADTENQARGESSEVAKTGEKQVSTKKAANKS).

It belongs to the small heat shock protein (HSP20) family.

This is 30 kDa heat shock protein (hsp30) from Emericella nidulans (strain FGSC A4 / ATCC 38163 / CBS 112.46 / NRRL 194 / M139) (Aspergillus nidulans).